Consider the following 132-residue polypeptide: Small ribosomal subunit protein uS8c (132 aa).

It belongs to the universal ribosomal protein uS8 family. Part of the 30S ribosomal subunit.

It is found in the plastid. It localises to the chloroplast. Functionally, one of the primary rRNA binding proteins, it binds directly to 16S rRNA central domain where it helps coordinate assembly of the platform of the 30S subunit. This Spirogyra maxima (Green alga) protein is Small ribosomal subunit protein uS8c (rps8).